The sequence spans 268 residues: 4-diphosphocytidyl-2-C-methyl-D-erythritol kinase (268 aa).

Lys-10 is a catalytic residue. Residue 101 to 111 (PTQAGLGGGST) coordinates ATP. The active site involves Asp-143.

The protein belongs to the GHMP kinase family. IspE subfamily.

The enzyme catalyses 4-CDP-2-C-methyl-D-erythritol + ATP = 4-CDP-2-C-methyl-D-erythritol 2-phosphate + ADP + H(+). It functions in the pathway isoprenoid biosynthesis; isopentenyl diphosphate biosynthesis via DXP pathway; isopentenyl diphosphate from 1-deoxy-D-xylulose 5-phosphate: step 3/6. Catalyzes the phosphorylation of the position 2 hydroxy group of 4-diphosphocytidyl-2C-methyl-D-erythritol. The protein is 4-diphosphocytidyl-2-C-methyl-D-erythritol kinase of Helicobacter acinonychis (strain Sheeba).